The primary structure comprises 301 residues: Putative ribosomal RNA methyltransferase PB17E12.10c (301 aa).

S-adenosyl-L-methionine contacts are provided by Gly-87, Trp-89, Asp-107, and Asp-186. Lys-247 acts as the Proton acceptor in catalysis.

Belongs to the class I-like SAM-binding methyltransferase superfamily. RNA methyltransferase RlmE family.

The enzyme catalyses a uridine in rRNA + S-adenosyl-L-methionine = a 2'-O-methyluridine in rRNA + S-adenosyl-L-homocysteine + H(+). This Schizosaccharomyces pombe (strain 972 / ATCC 24843) (Fission yeast) protein is Putative ribosomal RNA methyltransferase PB17E12.10c.